A 261-amino-acid polypeptide reads, in one-letter code: 5'-nucleotidase SurE (261 aa).

4 residues coordinate a divalent metal cation: Asp10, Asp11, Ser41, and Asn96.

This sequence belongs to the SurE nucleotidase family. The cofactor is a divalent metal cation.

The protein resides in the cytoplasm. The enzyme catalyses a ribonucleoside 5'-phosphate + H2O = a ribonucleoside + phosphate. In terms of biological role, nucleotidase that shows phosphatase activity on nucleoside 5'-monophosphates. This Methanococcoides burtonii (strain DSM 6242 / NBRC 107633 / OCM 468 / ACE-M) protein is 5'-nucleotidase SurE.